A 147-amino-acid polypeptide reads, in one-letter code: Ribosome maturation factor RimP (147 aa).

It belongs to the RimP family.

The protein resides in the cytoplasm. Its function is as follows. Required for maturation of 30S ribosomal subunits. The sequence is that of Ribosome maturation factor RimP from Thermosipho melanesiensis (strain DSM 12029 / CIP 104789 / BI429).